We begin with the raw amino-acid sequence, 361 residues long: Tetraacyldisaccharide 4'-kinase (361 aa).

An ATP-binding site is contributed by 49–56 (TTGGTGKT).

The protein belongs to the LpxK family.

The enzyme catalyses a lipid A disaccharide + ATP = a lipid IVA + ADP + H(+). It participates in glycolipid biosynthesis; lipid IV(A) biosynthesis; lipid IV(A) from (3R)-3-hydroxytetradecanoyl-[acyl-carrier-protein] and UDP-N-acetyl-alpha-D-glucosamine: step 6/6. In terms of biological role, transfers the gamma-phosphate of ATP to the 4'-position of a tetraacyldisaccharide 1-phosphate intermediate (termed DS-1-P) to form tetraacyldisaccharide 1,4'-bis-phosphate (lipid IVA). The protein is Tetraacyldisaccharide 4'-kinase of Chlorobaculum parvum (strain DSM 263 / NCIMB 8327) (Chlorobium vibrioforme subsp. thiosulfatophilum).